The chain runs to 362 residues: Protein RecA (362 aa).

An ATP-binding site is contributed by 77–84 (GPESSGKT).

This sequence belongs to the RecA family.

Its subcellular location is the cytoplasm. Functionally, can catalyze the hydrolysis of ATP in the presence of single-stranded DNA, the ATP-dependent uptake of single-stranded DNA by duplex DNA, and the ATP-dependent hybridization of homologous single-stranded DNAs. It interacts with LexA causing its activation and leading to its autocatalytic cleavage. In Rhizobium etli (strain ATCC 51251 / DSM 11541 / JCM 21823 / NBRC 15573 / CFN 42), this protein is Protein RecA.